We begin with the raw amino-acid sequence, 83 residues long: RNA-binding protein Hfq (83 aa).

One can recognise a Sm domain in the interval Asp10–Ile70.

It belongs to the Hfq family. In terms of assembly, homohexamer.

Functionally, RNA chaperone that binds small regulatory RNA (sRNAs) and mRNAs to facilitate mRNA translational regulation in response to envelope stress, environmental stress and changes in metabolite concentrations. Also binds with high specificity to tRNAs. The chain is RNA-binding protein Hfq from Desulfitobacterium hafniense (strain DSM 10664 / DCB-2).